Here is a 238-residue protein sequence, read N- to C-terminus: ATP synthase subunit a (238 aa).

5 consecutive transmembrane segments (helical) span residues 17 to 37 (LSNI…AIIC), 75 to 95 (FHVL…LGLP), 112 to 132 (DPIV…YYGI), 172 to 192 (YGNI…LAHI), and 194 to 214 (IFVG…SLFI).

It belongs to the ATPase A chain family. F-type ATPases have 2 components, CF(1) - the catalytic core - and CF(0) - the membrane proton channel. CF(1) has five subunits: alpha(3), beta(3), gamma(1), delta(1), epsilon(1). CF(0) has three main subunits: a(1), b(2) and c(9-12). The alpha and beta chains form an alternating ring which encloses part of the gamma chain. CF(1) is attached to CF(0) by a central stalk formed by the gamma and epsilon chains, while a peripheral stalk is formed by the delta and b chains.

The protein resides in the cell membrane. In terms of biological role, key component of the proton channel; it plays a direct role in the translocation of protons across the membrane. This chain is ATP synthase subunit a, found in Listeria monocytogenes serovar 1/2a (strain ATCC BAA-679 / EGD-e).